The chain runs to 433 residues: Peptidoglycan DD-endopeptidase ShyC (433 aa).

Residues 10-30 (WLHRVLITAFSAIIVFAIFFL) traverse the membrane as a helical segment. Residues histidine 299, aspartate 303, and histidine 380 each coordinate Zn(2+).

The protein belongs to the peptidase M23B family. Requires Zn(2+) as cofactor.

The protein resides in the cell inner membrane. It participates in cell wall degradation; peptidoglycan degradation. With respect to regulation, reduced activity in 0.5 mM EDTA and a complete loss of activity at higher EDTA concentrations. Cell wall peptidoglycan (PG) DD-endopeptidase. Hydrolyzes peptide cross-links which covalently connect adjacent PG strands probably to allow insertion of new glycans and thus cell wall expansion. Degrades purified whole PG sacculi in vitro. The sequence is that of Peptidoglycan DD-endopeptidase ShyC from Vibrio cholerae serotype O1 (strain ATCC 39315 / El Tor Inaba N16961).